The chain runs to 118 residues: Large ribosomal subunit protein bL20 (118 aa).

This sequence belongs to the bacterial ribosomal protein bL20 family.

Its function is as follows. Binds directly to 23S ribosomal RNA and is necessary for the in vitro assembly process of the 50S ribosomal subunit. It is not involved in the protein synthesizing functions of that subunit. The chain is Large ribosomal subunit protein bL20 from Yersinia pseudotuberculosis serotype O:1b (strain IP 31758).